The following is a 206-amino-acid chain: Outer-membrane lipoprotein carrier protein (206 aa).

The signal sequence occupies residues 1–20 (MRLIRMLLPVLALTTLTAHA).

Belongs to the LolA family. As to quaternary structure, monomer.

The protein resides in the periplasm. Functionally, participates in the translocation of lipoproteins from the inner membrane to the outer membrane. Only forms a complex with a lipoprotein if the residue after the N-terminal Cys is not an aspartate (The Asp acts as a targeting signal to indicate that the lipoprotein should stay in the inner membrane). This is Outer-membrane lipoprotein carrier protein from Pseudomonas fluorescens (strain Pf0-1).